The sequence spans 668 residues: Biosynthetic arginine decarboxylase (668 aa).

Lys-105 is modified (N6-(pyridoxal phosphate)lysine). 286–296 (LDVGGGLGVDY) contributes to the substrate binding site.

The protein belongs to the Orn/Lys/Arg decarboxylase class-II family. SpeA subfamily. It depends on Mg(2+) as a cofactor. Pyridoxal 5'-phosphate is required as a cofactor.

It carries out the reaction L-arginine + H(+) = agmatine + CO2. Its function is as follows. Catalyzes the biosynthesis of agmatine from arginine. This chain is Biosynthetic arginine decarboxylase, found in Rhodopirellula baltica (strain DSM 10527 / NCIMB 13988 / SH1).